The primary structure comprises 297 residues: Chelated iron transport system membrane protein YfeD (297 aa).

8 helical membrane-spanning segments follow: residues 20–40 (AIVA…YLVL), 58–78 (IVLA…SGIF), 96–116 (TVMG…FSRI), 133–153 (ISLT…LVVL), 172–192 (IGLP…LTIV), 197–217 (AVGV…AFMI), 224–244 (MLVV…LISF), and 248–268 (GATG…ALIY).

Belongs to the ABC-3 integral membrane protein family.

It is found in the cell inner membrane. Functionally, part of an ATP-driven transport system YfeABCD for chelated iron. The protein is Chelated iron transport system membrane protein YfeD (yfeD) of Yersinia pestis.